The primary structure comprises 102 residues: Caroteno-chlorophyll a-c-binding protein (102 aa).

The chlorophyll a site is built by Glu-36 and His-39. Residues 78–98 (VLGLIKIVPAGLWGIMIFYAA) form a helical membrane-spanning segment.

It belongs to the light-harvesting chlorophyll a/b-binding (LHC) protein family. In terms of assembly, the LHC complex consists of chlorophyll a-b binding proteins. Binds at least 14 chlorophylls (8 Chl-a and 6 Chl-b) and carotenoids such as lutein and neoxanthin. is required as a cofactor. In terms of processing, photoregulated by reversible phosphorylation of its threonine residues.

The protein localises to the plastid. The protein resides in the chloroplast thylakoid membrane. Functionally, the light-harvesting complex (LHC) functions as a light receptor, it captures and delivers excitation energy to photosystems with which it is closely associated. The protein is Caroteno-chlorophyll a-c-binding protein of Amphidinium carterae (Dinoflagellate).